The primary structure comprises 227 residues: Ribosomal RNA large subunit methyltransferase E (227 aa).

The S-adenosyl-L-methionine site is built by Gly78, Trp80, Asp103, Asp119, and Asp143. Catalysis depends on Lys183, which acts as the Proton acceptor.

This sequence belongs to the class I-like SAM-binding methyltransferase superfamily. RNA methyltransferase RlmE family.

It localises to the cytoplasm. The catalysed reaction is uridine(2552) in 23S rRNA + S-adenosyl-L-methionine = 2'-O-methyluridine(2552) in 23S rRNA + S-adenosyl-L-homocysteine + H(+). Specifically methylates the uridine in position 2552 of 23S rRNA at the 2'-O position of the ribose in the fully assembled 50S ribosomal subunit. This Rickettsia bellii (strain RML369-C) protein is Ribosomal RNA large subunit methyltransferase E.